Here is a 313-residue protein sequence, read N- to C-terminus: ADP-L-glycero-D-manno-heptose-6-epimerase (313 aa).

NADP(+)-binding positions include 10-11 (MI), 31-32 (DN), Lys38, Arg53, 75-79 (EGACS), and Asn92. Residue Tyr139 is the Proton acceptor of the active site. Lys143 serves as a coordination point for NADP(+). Asn174 is a binding site for substrate. NADP(+) is bound by residues Val175 and Lys183. Residue Lys183 is the Proton acceptor of the active site. Substrate is bound by residues Ser185, His192, 206 to 209 (FEGS), Arg214, and Tyr277.

This sequence belongs to the NAD(P)-dependent epimerase/dehydratase family. HldD subfamily. As to quaternary structure, homopentamer. It depends on NADP(+) as a cofactor.

The catalysed reaction is ADP-D-glycero-beta-D-manno-heptose = ADP-L-glycero-beta-D-manno-heptose. Its pathway is nucleotide-sugar biosynthesis; ADP-L-glycero-beta-D-manno-heptose biosynthesis; ADP-L-glycero-beta-D-manno-heptose from D-glycero-beta-D-manno-heptose 7-phosphate: step 4/4. It functions in the pathway bacterial outer membrane biogenesis; LPS core biosynthesis. Functionally, catalyzes the interconversion between ADP-D-glycero-beta-D-manno-heptose and ADP-L-glycero-beta-D-manno-heptose via an epimerization at carbon 6 of the heptose. This is ADP-L-glycero-D-manno-heptose-6-epimerase from Vibrio parahaemolyticus serotype O3:K6 (strain RIMD 2210633).